Reading from the N-terminus, the 106-residue chain is Urease subunit beta (106 aa).

The protein belongs to the urease beta subunit family. In terms of assembly, heterotrimer of UreA (gamma), UreB (beta) and UreC (alpha) subunits. Three heterotrimers associate to form the active enzyme.

Its subcellular location is the cytoplasm. It catalyses the reaction urea + 2 H2O + H(+) = hydrogencarbonate + 2 NH4(+). It functions in the pathway nitrogen metabolism; urea degradation; CO(2) and NH(3) from urea (urease route): step 1/1. This Synechococcus sp. (strain CC9902) protein is Urease subunit beta.